Reading from the N-terminus, the 99-residue chain is Large ribosomal subunit protein bL27 (99 aa).

Positions 1-9 are excised as a propeptide; that stretch reads MLLMNLQLF.

This sequence belongs to the bacterial ribosomal protein bL27 family. In terms of processing, the N-terminus is cleaved by ribosomal processing cysteine protease Prp.

The sequence is that of Large ribosomal subunit protein bL27 from Clostridium novyi (strain NT).